The primary structure comprises 432 residues: Diaminopimelate decarboxylase (432 aa).

Lysine 66 is modified (N6-(pyridoxal phosphate)lysine). Pyridoxal 5'-phosphate contacts are provided by residues glycine 248 and glutamate 290–arginine 293. Substrate is bound by residues arginine 293, arginine 330, and tyrosine 334. Cysteine 361 functions as the Proton donor in the catalytic mechanism. Glutamate 362 and tyrosine 390 together coordinate substrate. Tyrosine 390 is a pyridoxal 5'-phosphate binding site.

It belongs to the Orn/Lys/Arg decarboxylase class-II family. LysA subfamily. Homodimer. Requires pyridoxal 5'-phosphate as cofactor.

It catalyses the reaction meso-2,6-diaminopimelate + H(+) = L-lysine + CO2. Its pathway is amino-acid biosynthesis; L-lysine biosynthesis via DAP pathway; L-lysine from DL-2,6-diaminopimelate: step 1/1. Specifically catalyzes the decarboxylation of meso-diaminopimelate (meso-DAP) to L-lysine. The chain is Diaminopimelate decarboxylase from Bacillus methanolicus.